Reading from the N-terminus, the 57-residue chain is UPF0391 membrane protein RPA3505 (57 aa).

Helical transmembrane passes span 4–24 (WVVTFLVVALIAGLLGFGGIA) and 30–50 (IAKIIFFIAIVLFLVSAVISI).

It belongs to the UPF0391 family.

The protein resides in the cell membrane. This is UPF0391 membrane protein RPA3505 from Rhodopseudomonas palustris (strain ATCC BAA-98 / CGA009).